The following is a 384-amino-acid chain: S-adenosylmethionine synthase (384 aa).

His-15 contacts ATP. Asp-17 is a binding site for Mg(2+). Position 43 (Glu-43) interacts with K(+). L-methionine is bound by residues Glu-56 and Gln-99. Residues 99-109 (QSADINQGVDR) are flexible loop. Residues 164 to 166 (DAK), 230 to 231 (RF), Asp-239, 245 to 246 (RK), Ala-262, and Lys-266 each bind ATP. L-methionine is bound at residue Asp-239. Lys-270 contributes to the L-methionine binding site.

The protein belongs to the AdoMet synthase family. Homotetramer; dimer of dimers. Requires Mg(2+) as cofactor. K(+) is required as a cofactor.

Its subcellular location is the cytoplasm. The catalysed reaction is L-methionine + ATP + H2O = S-adenosyl-L-methionine + phosphate + diphosphate. The protein operates within amino-acid biosynthesis; S-adenosyl-L-methionine biosynthesis; S-adenosyl-L-methionine from L-methionine: step 1/1. Functionally, catalyzes the formation of S-adenosylmethionine (AdoMet) from methionine and ATP. The overall synthetic reaction is composed of two sequential steps, AdoMet formation and the subsequent tripolyphosphate hydrolysis which occurs prior to release of AdoMet from the enzyme. The protein is S-adenosylmethionine synthase of Haemophilus influenzae (strain 86-028NP).